Here is a 262-residue protein sequence, read N- to C-terminus: Acyl-[acyl-carrier-protein]--UDP-N-acetylglucosamine O-acyltransferase (262 aa).

This sequence belongs to the transferase hexapeptide repeat family. LpxA subfamily. Homotrimer.

It localises to the cytoplasm. It catalyses the reaction a (3R)-hydroxyacyl-[ACP] + UDP-N-acetyl-alpha-D-glucosamine = a UDP-3-O-[(3R)-3-hydroxyacyl]-N-acetyl-alpha-D-glucosamine + holo-[ACP]. It functions in the pathway glycolipid biosynthesis; lipid IV(A) biosynthesis; lipid IV(A) from (3R)-3-hydroxytetradecanoyl-[acyl-carrier-protein] and UDP-N-acetyl-alpha-D-glucosamine: step 1/6. Its function is as follows. Involved in the biosynthesis of lipid A, a phosphorylated glycolipid that anchors the lipopolysaccharide to the outer membrane of the cell. The polypeptide is Acyl-[acyl-carrier-protein]--UDP-N-acetylglucosamine O-acyltransferase (Klebsiella pneumoniae (strain 342)).